Consider the following 391-residue polypeptide: Chorismate synthase (391 aa).

Arg48 serves as a coordination point for NADP(+). Residues 126 to 128 (RAS), Gly286, 301 to 305 (KPTSS), and Arg328 contribute to the FMN site.

This sequence belongs to the chorismate synthase family. FMNH2 serves as cofactor.

It carries out the reaction 5-O-(1-carboxyvinyl)-3-phosphoshikimate = chorismate + phosphate. The protein operates within metabolic intermediate biosynthesis; chorismate biosynthesis; chorismate from D-erythrose 4-phosphate and phosphoenolpyruvate: step 7/7. Its function is as follows. Catalyzes the anti-1,4-elimination of the C-3 phosphate and the C-6 proR hydrogen from 5-enolpyruvylshikimate-3-phosphate (EPSP) to yield chorismate, which is the branch point compound that serves as the starting substrate for the three terminal pathways of aromatic amino acid biosynthesis. This reaction introduces a second double bond into the aromatic ring system. The chain is Chorismate synthase from Saccharolobus islandicus (strain M.16.27) (Sulfolobus islandicus).